Consider the following 98-residue polypeptide: NADH-ubiquinone oxidoreductase chain 4L (98 aa).

A run of 3 helical transmembrane segments spans residues 1–21 (MPII…GMLV), 29–49 (SLLC…LMAL), and 61–81 (IALL…LVSI).

This sequence belongs to the complex I subunit 4L family. Core subunit of respiratory chain NADH dehydrogenase (Complex I) which is composed of 45 different subunits.

Its subcellular location is the mitochondrion inner membrane. It catalyses the reaction a ubiquinone + NADH + 5 H(+)(in) = a ubiquinol + NAD(+) + 4 H(+)(out). Core subunit of the mitochondrial membrane respiratory chain NADH dehydrogenase (Complex I) which catalyzes electron transfer from NADH through the respiratory chain, using ubiquinone as an electron acceptor. Part of the enzyme membrane arm which is embedded in the lipid bilayer and involved in proton translocation. In Piliocolobus badius (Western red colobus), this protein is NADH-ubiquinone oxidoreductase chain 4L (MT-ND4L).